Reading from the N-terminus, the 40-residue chain is Allophycocyanin alpha-B chain (40 aa).

The protein belongs to the phycobiliprotein family. As to quaternary structure, heterodimer of an alpha and a beta chain. Post-translationally, contains one covalently linked bilin chromophore.

It is found in the cellular thylakoid membrane. Light-harvesting photosynthetic bile pigment-protein from the phycobiliprotein complex. Allophycocyanin has a maximum absorption at approximately 650 nanometers. In Mastigocladus laminosus (Fischerella sp.), this protein is Allophycocyanin alpha-B chain.